Here is a 195-residue protein sequence, read N- to C-terminus: MPAVKKTNRRAQILQALAGMLETSPGQRITTAKLAEKVGVSEAALYRHFPSKARMFEGLIEFIEETLFTRINKIVNEEKDSLTRCQLILHLILGFAEKNPGITRILNGDALMGEQDRLRARIAKLFERLETQLKQVLRERKLREGKTLSADEAIIANMMICYTDGRINGFIRSGFTRKPTEQFNEQWAAFKQMFV.

The HTH tetR-type domain maps to 7–67 (TNRRAQILQA…GLIEFIEETL (61 aa)). Positions 30–49 (TTAKLAEKVGVSEAALYRHF) form a DNA-binding region, H-T-H motif. Residues 109 to 141 (DALMGEQDRLRARIAKLFERLETQLKQVLRERK) are a coiled coil.

The protein belongs to the nucleoid occlusion factor SlmA family. Homodimer. Interacts with FtsZ.

It is found in the cytoplasm. Its subcellular location is the nucleoid. Required for nucleoid occlusion (NO) phenomenon, which prevents Z-ring formation and cell division over the nucleoid. Acts as a DNA-associated cell division inhibitor that binds simultaneously chromosomal DNA and FtsZ, and disrupts the assembly of FtsZ polymers. SlmA-DNA-binding sequences (SBS) are dispersed on non-Ter regions of the chromosome, preventing FtsZ polymerization at these regions. The polypeptide is Nucleoid occlusion factor SlmA (Alteromonas mediterranea (strain DSM 17117 / CIP 110805 / LMG 28347 / Deep ecotype)).